A 235-amino-acid polypeptide reads, in one-letter code: Ribitol-5-phosphate cytidylyltransferase (235 aa).

CTP contacts are provided by residues 7 to 10 (LAGG), 82 to 88 (GADRNTS), and S113.

This sequence belongs to the IspD/TarI cytidylyltransferase family. TarI subfamily.

It catalyses the reaction D-ribitol 5-phosphate + CTP + H(+) = CDP-L-ribitol + diphosphate. The protein operates within cell wall biogenesis; poly(ribitol phosphate) teichoic acid biosynthesis. Its function is as follows. Catalyzes the transfer of the cytidylyl group of CTP to D-ribitol 5-phosphate. The sequence is that of Ribitol-5-phosphate cytidylyltransferase from Streptococcus pneumoniae serotype 19F (strain G54).